The primary structure comprises 444 residues: Tubulin beta-8 chain (444 aa).

The MREI motif motif lies at 1 to 4 (MREI). 6 residues coordinate GTP: Gln-11, Glu-69, Ser-138, Gly-142, Thr-143, and Gly-144. Glu-69 is a Mg(2+) binding site. Ser-172 carries the phosphoserine; by CDK1 modification. GTP-binding residues include Asn-204 and Asn-226. 5-glutamyl polyglutamate is present on Glu-436.

Belongs to the tubulin family. As to quaternary structure, dimer of alpha and beta chains. A typical microtubule is a hollow water-filled tube with an outer diameter of 25 nm and an inner diameter of 15 nM. Alpha-beta heterodimers associate head-to-tail to form protofilaments running lengthwise along the microtubule wall with the beta-tubulin subunit facing the microtubule plus end conferring a structural polarity. Microtubules usually have 13 protofilaments but different protofilament numbers can be found in some organisms and specialized cells. Mg(2+) is required as a cofactor. In terms of processing, some glutamate residues at the C-terminus are polyglycylated, resulting in polyglycine chains on the gamma-carboxyl group. Glycylation is mainly limited to tubulin incorporated into axonemes (cilia and flagella) whereas glutamylation is prevalent in neuronal cells, centrioles, axonemes, and the mitotic spindle. Both modifications can coexist on the same protein on adjacent residues, and lowering polyglycylation levels increases polyglutamylation, and reciprocally. Cilia and flagella glycylation is required for their stability and maintenance. Flagella glycylation controls sperm motility. Some glutamate residues at the C-terminus are polyglutamylated, resulting in polyglutamate chains on the gamma-carboxyl group. Polyglutamylation plays a key role in microtubule severing by spastin (SPAST). SPAST preferentially recognizes and acts on microtubules decorated with short polyglutamate tails: severing activity by SPAST increases as the number of glutamates per tubulin rises from one to eight, but decreases beyond this glutamylation threshold. Glutamylation is also involved in cilia motility. Post-translationally, phosphorylated on Ser-172 by CDK1 during the cell cycle, from metaphase to telophase, but not in interphase. This phosphorylation inhibits tubulin incorporation into microtubules.

Its subcellular location is the cytoplasm. The protein resides in the cytoskeleton. It is found in the spindle. Functionally, tubulin is the major constituent of microtubules, a cylinder consisting of laterally associated linear protofilaments composed of alpha- and beta-tubulin heterodimers. Microtubules grow by the addition of GTP-tubulin dimers to the microtubule end, where a stabilizing cap forms. Below the cap, tubulin dimers are in GDP-bound state, owing to GTPase activity of alpha-tubulin. Has a key role in meiotic spindle assembly and oocyte maturation. The chain is Tubulin beta-8 chain (TUBB8) from Papio hamadryas (Hamadryas baboon).